Reading from the N-terminus, the 378-residue chain is Serpin B6 (378 aa).

An N-acetylmethionine modification is found at methionine 1. Lysine 196 is subject to N6-acetyllysine.

This sequence belongs to the serpin family. Ov-serpin subfamily. In terms of assembly, forms a complex with the monomeric form of beta-tryptase. As to expression, brain.

The protein resides in the cytoplasm. Its function is as follows. Inhibitor of cathepsin G, kallikrein-8 and thrombin. May play an important role in the inner ear in the protection against leakage of lysosomal content during stress. May be involved in the regulation of serine proteinases present in the brain or extravasated from the blood. This chain is Serpin B6 (SERPINB6), found in Bos taurus (Bovine).